Consider the following 678-residue polypeptide: UvrABC system protein C (678 aa).

One can recognise a GIY-YIG domain in the interval 16 to 95; that stretch reads VEPGVYRFRD…IKEFDPRFNI (80 aa). Residues 208 to 243 form the UVR domain; that stretch reads DRLIREMEQQMNAAAEELDFERAARLRDNIGAMRRA. Residues 477-508 form a disordered region; sequence HLRDAEAAPEGRPEQGPRASARPEQGPRASAR. Positions 479–491 are enriched in basic and acidic residues; that stretch reads RDAEAAPEGRPEQ.

It belongs to the UvrC family. As to quaternary structure, interacts with UvrB in an incision complex.

It is found in the cytoplasm. Functionally, the UvrABC repair system catalyzes the recognition and processing of DNA lesions. UvrC both incises the 5' and 3' sides of the lesion. The N-terminal half is responsible for the 3' incision and the C-terminal half is responsible for the 5' incision. This Mycolicibacterium vanbaalenii (strain DSM 7251 / JCM 13017 / BCRC 16820 / KCTC 9966 / NRRL B-24157 / PYR-1) (Mycobacterium vanbaalenii) protein is UvrABC system protein C.